The following is a 250-amino-acid chain: Zinc finger protein lsy-27 (250 aa).

C2H2-type zinc fingers lie at residues 25-48 and 52-75; these read FVCS…QLMH and HTCM…RNEH. A C2H2-type 3; degenerate zinc finger spans residues 81 to 104; the sequence is FTCGCCNWTFASKRQLTEHTKCIQ. Disordered regions lie at residues 126–177 and 226–250; these read IQST…EAER and QKVK…QEIE. Positions 148 to 165 are enriched in low complexity; it reads SLSPSSSVSTSISSRDAS. Basic and acidic residues predominate over residues 239–250; sequence MIPEKHVKQEIE.

Involved in regulating left/right asymmetric differentiation of the gustatory ASE neurons. Plays a role in modulating expression of LIM/homeobox protein lim-6. The polypeptide is Zinc finger protein lsy-27 (Caenorhabditis elegans).